Consider the following 463-residue polypeptide: Endoglucanase (463 aa).

Residues 1-27 form the signal peptide; it reads MVEKRKIFTVLCACGIGFTSYTSCISA. Residues 28–55 constitute a propeptide that is removed on maturation; that stretch reads AAIDNDTLINNGHKINSSIITNSSQVSA. The Proton donor role is filled by Glu130. The active-site Nucleophile is Asp191.

Belongs to the glycosyl hydrolase 8 (cellulase D) family. In terms of processing, the N- and the C-terminus may be subjected to proteolysis.

The catalysed reaction is Endohydrolysis of (1-&gt;4)-beta-D-glucosidic linkages in cellulose, lichenin and cereal beta-D-glucans.. This chain is Endoglucanase, found in Bacillus sp. (strain KSM-330).